Here is a 397-residue protein sequence, read N- to C-terminus: S-adenosylmethionine synthase (397 aa).

Residue H15 coordinates ATP. D17 contributes to the Mg(2+) binding site. Residue E43 participates in K(+) binding. L-methionine contacts are provided by E56 and Q99. A flexible loop region spans residues 99 to 109 (QSGDIAMGVDE). ATP is bound by residues 175 to 177 (DGK), 241 to 242 (RF), D250, 256 to 257 (RK), A273, and K277. D250 is an L-methionine binding site. An L-methionine-binding site is contributed by K281.

It belongs to the AdoMet synthase family. In terms of assembly, homotetramer; dimer of dimers. Requires Mg(2+) as cofactor. It depends on K(+) as a cofactor.

It is found in the cytoplasm. The enzyme catalyses L-methionine + ATP + H2O = S-adenosyl-L-methionine + phosphate + diphosphate. It participates in amino-acid biosynthesis; S-adenosyl-L-methionine biosynthesis; S-adenosyl-L-methionine from L-methionine: step 1/1. Functionally, catalyzes the formation of S-adenosylmethionine (AdoMet) from methionine and ATP. The overall synthetic reaction is composed of two sequential steps, AdoMet formation and the subsequent tripolyphosphate hydrolysis which occurs prior to release of AdoMet from the enzyme. The polypeptide is S-adenosylmethionine synthase (Clostridioides difficile (strain 630) (Peptoclostridium difficile)).